The sequence spans 154 residues: Protein X (154 aa).

Residues 28–48 are disordered; it reads RPLPGPLGTLPPASPPAVPTD. A mitochondrial targeting sequence region spans residues 68-117; that stretch reads PCALRFTSARRMETTVNAHGNLPKVLHKRTLGLSAMSTTDLEAYFKDCVF.

This sequence belongs to the orthohepadnavirus protein X family. As to quaternary structure, may form homodimer. May interact with host CEBPA, CFLAR, CREB1, DDB1, E4F1, HBXIP, HSPD1/HSP60, NFKBIA, POLR2E and SMAD4. Interacts with host SMC5-SMC6 complex and induces its degradation. Interacts with host TRPC4AP; leading to prevent ubiquitination of TRPC4AP. Interacts with host PLSCR1; this interaction promotes ubiquitination and degradation of HBx and impairs HBx-mediated cell proliferation. A fraction may be phosphorylated in insect cells and HepG2 cells, a human hepatoblastoma cell line. Phosphorylated in vitro by host protein kinase C or mitogen-activated protein kinase. N-acetylated in insect cells.

Its subcellular location is the host cytoplasm. It is found in the host nucleus. It localises to the host mitochondrion. Functionally, multifunctional protein that plays a role in silencing host antiviral defenses and promoting viral transcription. Does not seem to be essential for HBV infection. May be directly involved in development of cirrhosis and liver cancer (hepatocellular carcinoma). Most of cytosolic activities involve modulation of cytosolic calcium. The effect on apoptosis is controversial depending on the cell types in which the studies have been conducted. May induce apoptosis by localizing in mitochondria and causing loss of mitochondrial membrane potential. May also modulate apoptosis by binding host CFLAR, a key regulator of the death-inducing signaling complex (DISC). Promotes viral transcription by using the host E3 ubiquitin ligase DDB1 to target the SMC5-SMC6 complex to proteasomal degradation. This host complex would otherwise bind to viral episomal DNA, and prevents its transcription. Moderately stimulates transcription of many different viral and cellular transcription elements. Promoters and enhancers stimulated by HBx contain DNA binding sites for NF-kappa-B, AP-1, AP-2, c-EBP, ATF/CREB, or the calcium-activated factor NF-AT. The protein is Protein X of Hepatitis B virus genotype B2 subtype adw (isolate China/patient4/1996) (HBV-B).